The sequence spans 604 residues: Aspartate--tRNA(Asp/Asn) ligase (604 aa).

Position 175 (Glu175) interacts with L-aspartate. The tract at residues 199-202 (QQFK) is aspartate. Residues Arg221 and His456 each contribute to the L-aspartate site. 221 to 223 (RDE) serves as a coordination point for ATP. Glu496 contacts ATP. Residue Arg503 coordinates L-aspartate. 548-551 (GVDR) lines the ATP pocket.

It belongs to the class-II aminoacyl-tRNA synthetase family. Type 1 subfamily. Homodimer.

The protein localises to the cytoplasm. It catalyses the reaction tRNA(Asx) + L-aspartate + ATP = L-aspartyl-tRNA(Asx) + AMP + diphosphate. Functionally, aspartyl-tRNA synthetase with relaxed tRNA specificity since it is able to aspartylate not only its cognate tRNA(Asp) but also tRNA(Asn). Reaction proceeds in two steps: L-aspartate is first activated by ATP to form Asp-AMP and then transferred to the acceptor end of tRNA(Asp/Asn). The protein is Aspartate--tRNA(Asp/Asn) ligase of Methylobacterium sp. (strain 4-46).